A 168-amino-acid polypeptide reads, in one-letter code: Transcription antitermination protein NusB (168 aa).

Belongs to the NusB family.

Its function is as follows. Involved in transcription antitermination. Required for transcription of ribosomal RNA (rRNA) genes. Binds specifically to the boxA antiterminator sequence of the ribosomal RNA (rrn) operons. The chain is Transcription antitermination protein NusB from Chlamydia trachomatis serovar A (strain ATCC VR-571B / DSM 19440 / HAR-13).